Reading from the N-terminus, the 37-residue chain is Large ribosomal subunit protein bL36 (37 aa).

It belongs to the bacterial ribosomal protein bL36 family.

The polypeptide is Large ribosomal subunit protein bL36 (Listeria innocua serovar 6a (strain ATCC BAA-680 / CLIP 11262)).